The sequence spans 169 residues: Probable inosine/xanthosine triphosphatase (169 aa).

7-12 (STNKAK) is a substrate binding site. Glu35 lines the Mg(2+) pocket.

Belongs to the YjjX NTPase family. As to quaternary structure, homodimer. Mg(2+) serves as cofactor. Mn(2+) is required as a cofactor.

The catalysed reaction is XTP + H2O = XDP + phosphate + H(+). It catalyses the reaction ITP + H2O = IDP + phosphate + H(+). Phosphatase that hydrolyzes non-canonical purine nucleotides such as XTP and ITP to their respective diphosphate derivatives. Probably excludes non-canonical purines from DNA/RNA precursor pool, thus preventing their incorporation into DNA/RNA and avoiding chromosomal lesions. This chain is Probable inosine/xanthosine triphosphatase, found in Sulfurisphaera tokodaii (strain DSM 16993 / JCM 10545 / NBRC 100140 / 7) (Sulfolobus tokodaii).